We begin with the raw amino-acid sequence, 511 residues long: Cytochrome P450 26B1 (511 aa).

Cys440 contributes to the heme binding site.

This sequence belongs to the cytochrome P450 family. Requires heme as cofactor.

It localises to the endoplasmic reticulum membrane. The protein resides in the microsome membrane. It carries out the reaction all-trans-retinoate + reduced [NADPH--hemoprotein reductase] + O2 = all-trans-4-hydroxyretinoate + oxidized [NADPH--hemoprotein reductase] + H2O + H(+). The catalysed reaction is all-trans-retinoate + reduced [NADPH--hemoprotein reductase] + O2 = all-trans-18-hydroxyretinoate + oxidized [NADPH--hemoprotein reductase] + H2O + H(+). Its function is as follows. A cytochrome P450 monooxygenase involved in the metabolism of retinoates (RAs), the active metabolites of vitamin A, and critical signaling molecules in animals. RAs exist as at least four different isomers: all-trans-RA (atRA), 9-cis-RA, 13-cis-RA, and 9,13-dicis-RA, where atRA is considered to be the biologically active isomer, although 9-cis-RA and 13-cis-RA also have activity. Catalyzes the hydroxylation of atRA primarily at C-4 and C-18, thereby contributing to the regulation of atRA homeostasis and signaling. Hydroxylation of atRA limits its biological activity and initiates a degradative process leading to its eventual elimination. Involved in the convertion of atRA to all-trans-4-oxo-RA. Can oxidize all-trans-13,14-dihydroretinoate (DRA) to metabolites which could include all-trans-4-oxo-DRA, all-trans-4-hydroxy-DRA, all-trans-5,8-epoxy-DRA, and all-trans-18-hydroxy-DRA. Plays a role in skeletal development, both at the level of patterning and in the ossification of bone and the establishment of some synovial joints. The sequence is that of Cytochrome P450 26B1 from Danio rerio (Zebrafish).